Here is a 226-residue protein sequence, read N- to C-terminus: Small ribosomal subunit protein uS3 (226 aa).

The 69-residue stretch at 39–107 (IRKFIKNKLY…NILINITEIK (69 aa)) folds into the KH type-2 domain.

Belongs to the universal ribosomal protein uS3 family. In terms of assembly, part of the 30S ribosomal subunit. Forms a tight complex with proteins S10 and S14.

Its function is as follows. Binds the lower part of the 30S subunit head. Binds mRNA in the 70S ribosome, positioning it for translation. In Acetivibrio thermocellus (strain ATCC 27405 / DSM 1237 / JCM 9322 / NBRC 103400 / NCIMB 10682 / NRRL B-4536 / VPI 7372) (Clostridium thermocellum), this protein is Small ribosomal subunit protein uS3.